A 249-amino-acid polypeptide reads, in one-letter code: Histone H1 (249 aa).

Low complexity-rich tracts occupy residues 1–19 (MSDS…QTAS) and 27–43 (KKPA…TTAP). 2 disordered regions span residues 1–53 (MSDS…QQMV) and 105–249 (QTKG…ATKK). The 75-residue stretch at 45–119 (THPPTQQMVD…GASGSFKLSA (75 aa)) folds into the H15 domain. The span at 121–134 (SKKEPKPKVSSVEK) shows a compositional bias: basic and acidic residues. Residues 146-158 (AKKKTISATKKPK) are compositionally biased toward basic residues. The span at 173–190 (KSVDKKKAEKAKAKDAKK) shows a compositional bias: basic and acidic residues. Residues 195-233 (KAKPTTAKAKSSAAKPKTPKPKTTSAKPKKVVAAASPKK) show a composition bias toward low complexity. Positions 234-249 (AAAKKPKAKTASATKK) are enriched in basic residues.

This sequence belongs to the histone H1/H5 family.

The protein resides in the nucleus. It is found in the chromosome. Histones H1 are necessary for the condensation of nucleosome chains into higher-order structures. This Drosophila hydei (Fruit fly) protein is Histone H1 (His1).